We begin with the raw amino-acid sequence, 206 residues long: Small ribosomal subunit protein uS4 (206 aa).

Positions 96 to 156 constitute an S4 RNA-binding domain; sequence TRLDNVVYRM…EKSRTQARIK (61 aa).

The protein belongs to the universal ribosomal protein uS4 family. In terms of assembly, part of the 30S ribosomal subunit. Contacts protein S5. The interaction surface between S4 and S5 is involved in control of translational fidelity.

In terms of biological role, one of the primary rRNA binding proteins, it binds directly to 16S rRNA where it nucleates assembly of the body of the 30S subunit. Its function is as follows. With S5 and S12 plays an important role in translational accuracy. In Shewanella sp. (strain MR-4), this protein is Small ribosomal subunit protein uS4.